A 319-amino-acid polypeptide reads, in one-letter code: tRNA uridine(34) hydroxylase (319 aa).

The Rhodanese domain occupies 127-221; sequence KQEDTVIIDA…YGKDPEVQGE (95 aa). C181 functions as the Cysteine persulfide intermediate in the catalytic mechanism.

It belongs to the TrhO family.

The catalysed reaction is uridine(34) in tRNA + AH2 + O2 = 5-hydroxyuridine(34) in tRNA + A + H2O. In terms of biological role, catalyzes oxygen-dependent 5-hydroxyuridine (ho5U) modification at position 34 in tRNAs. The chain is tRNA uridine(34) hydroxylase from Bacillus cereus (strain G9842).